The sequence spans 244 residues: 5-oxoprolinase subunit A (244 aa).

The protein belongs to the LamB/PxpA family. In terms of assembly, forms a complex composed of PxpA, PxpB and PxpC.

It catalyses the reaction 5-oxo-L-proline + ATP + 2 H2O = L-glutamate + ADP + phosphate + H(+). Catalyzes the cleavage of 5-oxoproline to form L-glutamate coupled to the hydrolysis of ATP to ADP and inorganic phosphate. The sequence is that of 5-oxoprolinase subunit A from Salmonella typhimurium (strain LT2 / SGSC1412 / ATCC 700720).